A 142-amino-acid polypeptide reads, in one-letter code: Baculoviral IAP repeat-containing protein 5 (142 aa).

The BIR repeat unit spans residues 18 to 88 (RVSTFKNWPF…KHSSGCAFLS (71 aa)). Ser20 is subject to Phosphoserine; by AURKC. At Lys23 the chain carries N6-acetyllysine. Thr34 is subject to Phosphothreonine; by CDK1 and CDK15. Thr48 is modified (phosphothreonine). Zn(2+) is bound by residues Cys57, Cys60, His77, and Cys84. Residues Lys90, Lys110, Lys112, and Lys115 each carry the N6-acetyllysine modification. The residue at position 117 (Thr117) is a Phosphothreonine; by AURKB. Lys129 carries the post-translational modification N6-acetyllysine.

The protein belongs to the IAP family. Monomer or homodimer. Exists as a homodimer in the apo state and as a monomer in the CPC-bound state. The monomer protects cells against apoptosis more efficiently than the dimer. Only the dimeric form is capable of enhancing tubulin stability in cells. When phosphorylated, interacts with LAMTOR5/HBXIP; the resulting complex binds pro-CASP9, as well as active CASP9, but much less efficiently. Component of the chromosomal passenger complex (CPC) composed of at least BIRC5/survivin, CDCA8/borealin, INCENP, AURKB or AURKC; in the complex forms a triple-helix bundle-based subcomplex with INCENP and CDCA8. Interacts with JTB. Interacts (via BIR domain) with histone H3 phosphorylated at 'Thr-3' (H3pT3). Interacts with EVI5. Interacts with GTP-bound RAN in both the S and M phases of the cell cycle. Interacts with USP9X. Interacts with tubulin. Interacts with BIRC2/c-IAP1. The acetylated form at Lys-129 interacts with STAT3. The monomeric form deacetylated at Lys-129 interacts with XPO1/CRM1. The monomeric form interacts with XIAP/BIRC4. Both the dimeric and monomeric form can interact with DIABLO/SMAC. Interacts with BIRC6/bruce. Interacts with FBXL7; this interaction facilitates the polyubiquitination and subsequent proteasomal degradation of BIRC5 by the SCF(FBXL7) E3 ubiquitin-protein ligase complex. Ubiquitinated by the Cul9-RING ubiquitin-protein ligase complex, leading to its degradation. Ubiquitination is required for centrosomal targeting. Deubiquitinated by USP35 or USP38; leading to stabilization. In terms of processing, acetylation at Lys-129 results in its homodimerization, while deacetylation promotes the formation of monomers which heterodimerize with XPO1/CRM1 which facilitates its nuclear export. The acetylated form represses STAT3 transactivation. The dynamic equilibrium between its acetylation and deacetylation at Lys-129 determines its interaction with XPO1/CRM1, its subsequent subcellular localization, and its ability to inhibit STAT3 transactivation. Post-translationally, in vitro phosphorylation at Thr-117 by AURKB prevents interaction with INCENP and localization to mitotic chromosomes. Phosphorylation at Thr-48 by CK2 is critical for its mitotic and anti-apoptotic activities. Phosphorylation at Thr-34 by CDK15 is critical for its anti-apoptotic activity. Phosphorylation at Ser-20 by AURKC is critical for regulation of proper chromosome alignment and segregation, and possibly cytokinesis.

It localises to the cytoplasm. Its subcellular location is the nucleus. The protein resides in the chromosome. The protein localises to the centromere. It is found in the cytoskeleton. It localises to the spindle. Its subcellular location is the kinetochore. The protein resides in the midbody. In terms of biological role, multitasking protein that has dual roles in promoting cell proliferation and preventing apoptosis. Component of a chromosome passage protein complex (CPC) which is essential for chromosome alignment and segregation during mitosis and cytokinesis. Acts as an important regulator of the localization of this complex; directs CPC movement to different locations from the inner centromere during prometaphase to midbody during cytokinesis and participates in the organization of the center spindle by associating with polymerized microtubules. Involved in the recruitment of CPC to centromeres during early mitosis via association with histone H3 phosphorylated at 'Thr-3' (H3pT3) during mitosis. The complex with RAN plays a role in mitotic spindle formation by serving as a physical scaffold to help deliver the RAN effector molecule TPX2 to microtubules. May counteract a default induction of apoptosis in G2/M phase. The acetylated form represses STAT3 transactivation of target gene promoters. May play a role in neoplasia. Inhibitor of CASP3 and CASP7. Essential for the maintenance of mitochondrial integrity and function. The polypeptide is Baculoviral IAP repeat-containing protein 5 (BIRC5) (Bos taurus (Bovine)).